Consider the following 243-residue polypeptide: Segregation and condensation protein A (243 aa).

Belongs to the ScpA family. Component of a cohesin-like complex composed of ScpA, ScpB and the Smc homodimer, in which ScpA and ScpB bind to the head domain of Smc. The presence of the three proteins is required for the association of the complex with DNA.

It localises to the cytoplasm. Functionally, participates in chromosomal partition during cell division. May act via the formation of a condensin-like complex containing Smc and ScpB that pull DNA away from mid-cell into both cell halves. This chain is Segregation and condensation protein A, found in Thermoanaerobacter pseudethanolicus (strain ATCC 33223 / 39E) (Clostridium thermohydrosulfuricum).